Consider the following 515-residue polypeptide: Protein DETOXIFICATION 42 (515 aa).

The Cytoplasmic portion of the chain corresponds to 1–35; it reads MMSEDGYNTDFPRNPLYIFFSDFRSVLKFDELGLE. A helical membrane pass occupies residues 36–56; it reads IARIALPAALALTADPIASLV. The Extracellular portion of the chain corresponds to 57 to 58; it reads DT. A helical transmembrane segment spans residues 59-79; sequence AFIGQIGPVELAAVGVSIALF. Residues 80–168 lie on the Cytoplasmic side of the membrane; it reads NQVSRIAIFP…AKKRNIPSAS (89 aa). A helical membrane pass occupies residues 169 to 189; it reads SALIIGGVLGLFQAVFLISAA. The Extracellular segment spans residues 190 to 211; it reads KPLLSFMGVKHDSPMMRPSQRY. Residues 212–232 traverse the membrane as a helical segment; sequence LSLRSLGAPAVLLSLAAQGVF. Residues 233–242 are Cytoplasmic-facing; the sequence is RGFKDTTTPL. A helical membrane pass occupies residues 243 to 263; it reads FATVIGDVTNIILDPIFIFVF. Topologically, residues 264-266 are extracellular; it reads RLG. A helical transmembrane segment spans residues 267-287; sequence VTGAATAHVISQYLMCGILLW. Over 288–312 the chain is Cytoplasmic; it reads KLMGQVDIFNMSTKHLQFCRFMKNG. A helical membrane pass occupies residues 313–333; sequence FLLLMRVIAVTFCVTLSASLA. Residues 334-349 lie on the Extracellular side of the membrane; that stretch reads AREGSTSMAAFQVCLQ. A helical transmembrane segment spans residues 350 to 370; that stretch reads VWLATSLLADGYAVAGQAILA. The Cytoplasmic segment spans residues 371 to 390; it reads SAFAKKDYKRAAATASRVLQ. Residues 391 to 411 traverse the membrane as a helical segment; the sequence is LGLVLGFVLAVILGAGLHFGA. Residues 412-423 lie on the Extracellular side of the membrane; the sequence is RVFTKDDKVLHL. Residues 424-444 traverse the membrane as a helical segment; it reads ISIGLPFVAGTQPINALAFVF. Over 445 to 453 the chain is Cytoplasmic; that stretch reads DGVNFGASD. Residues 454-474 traverse the membrane as a helical segment; that stretch reads FGYAAASLVMVAIVSILCLLF. Residues 475-480 are Extracellular-facing; sequence LSSTHG. The helical transmembrane segment at 481–501 threads the bilayer; the sequence is FIGLWFGLTIYMSLRAAVGFW. The Cytoplasmic portion of the chain corresponds to 502–515; sequence RIGTGTGPWSFLRS.

The protein belongs to the multi antimicrobial extrusion (MATE) (TC 2.A.66.1) family. In terms of tissue distribution, expressed in roots, but not in shoots. Detected in the mature regions of the root, extending from above the root-hair region to the root-shoot junction.

It localises to the cell membrane. Citrate transporter critical for aluminum tolerance. Responsible for citrate exudation into the rhizosphere to protect roots from aluminum toxicity. This Arabidopsis thaliana (Mouse-ear cress) protein is Protein DETOXIFICATION 42.